The chain runs to 275 residues: Ribosomal protein L11 methyltransferase (275 aa).

Positions 123, 146, 167, and 208 each coordinate S-adenosyl-L-methionine.

It belongs to the methyltransferase superfamily. PrmA family.

It localises to the cytoplasm. It catalyses the reaction L-lysyl-[protein] + 3 S-adenosyl-L-methionine = N(6),N(6),N(6)-trimethyl-L-lysyl-[protein] + 3 S-adenosyl-L-homocysteine + 3 H(+). Methylates ribosomal protein L11. This chain is Ribosomal protein L11 methyltransferase, found in Campylobacter fetus subsp. fetus (strain 82-40).